Consider the following 203-residue polypeptide: Glycerol-3-phosphate acyltransferase (203 aa).

6 helical membrane-spanning segments follow: residues 3-23 (ILLATVAAYLIGSVSFAVVVS), 51-71 (KAAILTLVGDAFKGWLAVWLV), 74-94 (FGIGGEIGVALAAIAVFLGHL), 116-136 (AVHPVLGLATALTWLIVAFFF), 140-160 (SLAALVAAVFAPIFDVFLFGT), and 164-178 (PVAWAVLAMSVLLIW).

This sequence belongs to the PlsY family. As to quaternary structure, probably interacts with PlsX.

It is found in the cell inner membrane. It catalyses the reaction an acyl phosphate + sn-glycerol 3-phosphate = a 1-acyl-sn-glycero-3-phosphate + phosphate. It functions in the pathway lipid metabolism; phospholipid metabolism. Its function is as follows. Catalyzes the transfer of an acyl group from acyl-phosphate (acyl-PO(4)) to glycerol-3-phosphate (G3P) to form lysophosphatidic acid (LPA). This enzyme utilizes acyl-phosphate as fatty acyl donor, but not acyl-CoA or acyl-ACP. In Burkholderia pseudomallei (strain 1710b), this protein is Glycerol-3-phosphate acyltransferase.